The following is a 442-amino-acid chain: Trigger factor (442 aa).

Residues 163 to 248 enclose the PPIase FKBP-type domain; it reads YDRVTINYCI…IIKIEKKQEL (86 aa).

This sequence belongs to the FKBP-type PPIase family. Tig subfamily.

The protein resides in the cytoplasm. It carries out the reaction [protein]-peptidylproline (omega=180) = [protein]-peptidylproline (omega=0). Functionally, involved in protein export. Acts as a chaperone by maintaining the newly synthesized protein in an open conformation. Functions as a peptidyl-prolyl cis-trans isomerase. The polypeptide is Trigger factor (Buchnera aphidicola subsp. Acyrthosiphon pisum (strain 5A)).